The following is a 179-amino-acid chain: Probable splicing factor, arginine/serine-rich 6 (179 aa).

The RRM domain maps to 3–76 (AKVYVGGLPS…VRARVELSTG (74 aa)). The tract at residues 75–179 (TGQRRGGGGR…RSRSRSASPH (105 aa)) is disordered. A compositionally biased stretch (gly residues) spans 78 to 93 (RRGGGGRGGGFGGRGG). Residues 94 to 160 (GGRDRSPYRG…RSPQERDRSH (67 aa)) are compositionally biased toward basic and acidic residues. Residues 161–173 (SKSRSRSRSRSRS) are compositionally biased toward basic residues.

The protein belongs to the splicing factor SR family. In terms of processing, extensively phosphorylated on serine residues in the RS domain.

Its subcellular location is the nucleus. Its function is as follows. Plays a functionally redundant role in shifting germ cell sexual differentiation in hermaprodites. Required for the development of somatic gonad structures and for progression from larval stage to adulthood. The chain is Probable splicing factor, arginine/serine-rich 6 (rsp-6) from Caenorhabditis elegans.